Here is a 500-residue protein sequence, read N- to C-terminus: MQISSSGYILALDLGTTGNRAFIFNNAGKIVAQAYKELTQHYPQPGWLEHDAEEIWQDTCWVMKTAIVNAQISPSEIAAIGLTVQRETCLLWDKTTGRPLHKAIVWQDRRTAPLCHQLQEKGYAQEIYSRTGLVVDAYFSATKLRWLLDYITGVDLKNVLAGTIDTWILWKLTGGKVHATDHSNASRTMLMNLKTGEWDEQLLEILQIPAHILPQIQPSLGKFGVTDTSLLDAAIPITAILGDQQAALFGHGCDRPGLMKCTYGTGSFLVAHTGSNIVRSQHQLISTIAWTQADKQENINIGYALEGSMFTSGACIQWLRDGIKLIKTAAETETMANQVADNGGVYFVPAFSGLGAPYWDMNARGAFFGITASVQPQHLVRAVLEAIAYQVLEVVQAINASCSSPMQRLIVDGGACENNFLMQFQADVLGIPVERPTMRDTTVQGAAFAAGLAVGFWDSYTALVNQRQIDRIFEPGEGSQNATANFAIWQKAVKRSLDWV.

Thr-16 is a binding site for ADP. Positions 16 and 17 each coordinate ATP. Thr-16 contributes to the sn-glycerol 3-phosphate binding site. Residue Arg-20 coordinates ADP. The sn-glycerol 3-phosphate site is built by Arg-86, Glu-87, Tyr-138, and Asp-243. The glycerol site is built by Arg-86, Glu-87, Tyr-138, Asp-243, and Gln-244. Residues Thr-265 and Gly-313 each contribute to the ADP site. Thr-265, Gly-313, Gln-317, and Gly-414 together coordinate ATP. Positions 414 and 418 each coordinate ADP.

It belongs to the FGGY kinase family.

It carries out the reaction glycerol + ATP = sn-glycerol 3-phosphate + ADP + H(+). It functions in the pathway polyol metabolism; glycerol degradation via glycerol kinase pathway; sn-glycerol 3-phosphate from glycerol: step 1/1. With respect to regulation, inhibited by fructose 1,6-bisphosphate (FBP). Key enzyme in the regulation of glycerol uptake and metabolism. Catalyzes the phosphorylation of glycerol to yield sn-glycerol 3-phosphate. In Nostoc sp. (strain PCC 7120 / SAG 25.82 / UTEX 2576), this protein is Glycerol kinase.